Consider the following 40-residue polypeptide: ICTNNCAGYKGCNYACPLNDHPIAYKSCEGEFDPKSKCPR.

Disulfide bonds link C2–C16, C6–C28, and C12–C38.

The protein belongs to the protease inhibitor I20 (potato type II proteinase inhibitor) family.

The protein resides in the secreted. In terms of biological role, inhibits chymotrypsin and subtilisin strongly. The sequence is that of Proteinase inhibitor IIB from Solanum tuberosum (Potato).